Here is a 223-residue protein sequence, read N- to C-terminus: Deoxyribose-phosphate aldolase 2 (223 aa).

The Proton donor/acceptor role is filled by Asp-92. The active-site Schiff-base intermediate with acetaldehyde is the Lys-154. Lys-183 (proton donor/acceptor) is an active-site residue.

It belongs to the DeoC/FbaB aldolase family. DeoC type 1 subfamily.

The protein resides in the cytoplasm. It carries out the reaction 2-deoxy-D-ribose 5-phosphate = D-glyceraldehyde 3-phosphate + acetaldehyde. Its pathway is carbohydrate degradation; 2-deoxy-D-ribose 1-phosphate degradation; D-glyceraldehyde 3-phosphate and acetaldehyde from 2-deoxy-alpha-D-ribose 1-phosphate: step 2/2. Its function is as follows. Catalyzes a reversible aldol reaction between acetaldehyde and D-glyceraldehyde 3-phosphate to generate 2-deoxy-D-ribose 5-phosphate. This chain is Deoxyribose-phosphate aldolase 2, found in Oceanobacillus iheyensis (strain DSM 14371 / CIP 107618 / JCM 11309 / KCTC 3954 / HTE831).